Reading from the N-terminus, the 152-residue chain is Ribosome maturation factor RimP (152 aa).

This sequence belongs to the RimP family.

The protein resides in the cytoplasm. In terms of biological role, required for maturation of 30S ribosomal subunits. The chain is Ribosome maturation factor RimP from Pseudomonas putida (strain GB-1).